Here is a 324-residue protein sequence, read N- to C-terminus: Carbonic anhydrase 15 (324 aa).

The first 18 residues, 1–18, serve as a signal peptide directing secretion; sequence MWALDFLLSFLLIQLAAQ. Residues 23–293 enclose the Alpha-carbonic anhydrase domain; the sequence is GTWCYDSQDP…LGGRRISASP (271 aa). The Proton acceptor role is filled by H90. Residues H122, H124, and H147 each contribute to the Zn(2+) site. The active site involves Y155. N-linked (GlcNAc...) asparagine glycosylation is found at N184, N194, and N203. 231-232 serves as a coordination point for substrate; sequence TT. Residues 269-290 are disordered; the sequence is LHPRPLTSNFRPQQPLGGRRIS.

The protein belongs to the alpha-carbonic anhydrase family. Zn(2+) serves as cofactor.

Its subcellular location is the secreted. The enzyme catalyses hydrogencarbonate + H(+) = CO2 + H2O. With respect to regulation, repressed by coumarins. Functionally, reversible hydration of carbon dioxide. The chain is Carbonic anhydrase 15 (Ca15) from Mus musculus (Mouse).